Reading from the N-terminus, the 225-residue chain is UPF0173 metal-dependent hydrolase Pcal_1074 (225 aa).

This sequence belongs to the UPF0173 family.

The protein is UPF0173 metal-dependent hydrolase Pcal_1074 of Pyrobaculum calidifontis (strain DSM 21063 / JCM 11548 / VA1).